Reading from the N-terminus, the 322-residue chain is Nucleoprotein (322 aa).

RNA is bound by residues tyrosine 43, tyrosine 46, valine 76, arginine 122, lysine 240, and serine 269.

The protein belongs to the tenuiviruses nucleocapsid protein family.

It localises to the virion. It is found in the host cytoplasm. Its function is as follows. Encapsidates the genome, protecting it from nucleases. The encapsidated genomic RNA is termed the nucleocapsid (NC), and serves as template for viral transcription and replication. The protein is Nucleoprotein of Avena sativa (Oat).